Consider the following 1710-residue polypeptide: Latrophilin Cirl (1710 aa).

At 1 to 767 (MLPTILSISY…LFTMFDGNMR (767 aa)) the chain is on the extracellular side. One can recognise an SUEL-type lectin domain in the interval 25-114 (ACEGKKLTIE…KYLEAHYQCI (90 aa)). The N-linked (GlcNAc...) asparagine glycan is linked to Asn142. The disordered stretch occupies residues 183-304 (QHTAVTHSTP…SGSVVPGNGS (122 aa)). Composition is skewed to polar residues over residues 185–198 (TAVT…STTA) and 256–265 (NATSPSNTRI). N-linked (GlcNAc...) asparagine glycosylation is present at Asn256. Composition is skewed to low complexity over residues 275 to 285 (DDGTLLTTKSS) and 295 to 304 (SGSVVPGNGS). N-linked (GlcNAc...) asparagine glycans are attached at residues Asn302 and Asn341. Positions 376 to 400 (YDEYDDDPSSTTPATSSADCLHNSS) are disordered. The segment covering 384-394 (SSTTPATSSAD) has biased composition (low complexity). N-linked (GlcNAc...) asparagine glycans are attached at residues Asn398, Asn655, Asn703, and Asn730. The region spanning 561-754 (RSVVQKVKNI…AILMDVVDEH (194 aa)) is the GAIN-B domain. 2 disulfide bridges follow: Cys709-Cys736 and Cys724-Cys738. Residues 709–754 (CVFWNYIDHAWSANGCSLESTNRTHSVCSCNHLTNFAILMDVVDEH) form a GPS region. A helical membrane pass occupies residues 768–788 (IFIYISIGICVVFIVIALLTL). Residues 789 to 801 (KLFNGVFVKSART) lie on the Cytoplasmic side of the membrane. A helical transmembrane segment spans residues 802–822 (SIYTSIYLCLLAIELLFLLGI). The Extracellular portion of the chain corresponds to 823 to 828 (EQTETS). The chain crosses the membrane as a helical span at residues 829-849 (IFCGFITIFLHCAILSGTAWF). Over 850 to 875 (CYEAFHSYSTLTSDELLLEVDQTPKV) the chain is Cytoplasmic. The chain crosses the membrane as a helical span at residues 876 to 896 (NCYYLLSYGLSLSVVAISLVI). Residues 897 to 920 (DPSTYTQNDYCVLMEANALFYATF) are Extracellular-facing. A helical membrane pass occupies residues 921–941 (VMPVLVFFVAAIGYTFLSWII). The Cytoplasmic segment spans residues 942-968 (MCRKSRTGLKTKEHTRLASVRFDIRCS). Residues 969-989 (FVFLLLLSAVWCSAYFYLRGA) traverse the membrane as a helical segment. Residues 990-999 (KMDDDTADVY) lie on the Extracellular side of the membrane. A helical membrane pass occupies residues 1000–1020 (GYCFICFNTLLGLYIFVFHCI). At 1021-1710 (QNEKIRREYR…VRCYLEPLAK (690 aa)) the chain is on the cytoplasmic side. A phosphoserine mark is found at Ser1156, Ser1253, Ser1260, Ser1329, and Ser1330. Residues 1234–1259 (KPNSGQHGKKKRGAGGVPASPSGSLH) are disordered. Disordered stretches follow at residues 1452-1540 (GGGS…SDER) and 1568-1690 (DYGA…QQRH). Residues 1458–1483 (GGSVSSRSQQQQLKKQQQQQSLAQQR) are compositionally biased toward low complexity. 2 stretches are compositionally biased toward acidic residues: residues 1491 to 1505 (DDDD…EEAT) and 1515 to 1528 (CDED…DLED). Over residues 1638 to 1650 (QTPAQKRQQLQKL) the composition is skewed to polar residues. Low complexity predominate over residues 1651 to 1672 (SPQSTTSSSSHTSHSNPNPHPH). Positions 1673–1689 (QLTHPHPHQHPPHHQQR) are enriched in basic residues.

The protein belongs to the G-protein coupled receptor 2 family. LN-TM7 subfamily. As to quaternary structure, forms a heterodimer, consisting of a large extracellular region non-covalently linked to a seven-transmembrane moiety. Proteolytically cleaved into 2 subunits, an extracellular subunit and a seven-transmembrane subunit.

Its subcellular location is the cell membrane. The protein is Latrophilin Cirl of Drosophila erecta (Fruit fly).